The following is a 461-amino-acid chain: Early growth response factor homolog 1 (461 aa).

Disordered stretches follow at residues 1–25 (MALH…PSLN), 96–152 (TLMP…ELTL), and 232–308 (DVLH…YSSL). 4 stretches are compositionally biased toward polar residues: residues 96 to 105 (TLMPAPSSSY), 129 to 144 (GSNS…GNSK), 249 to 265 (LGSS…SRPS), and 272 to 291 (QRTN…SMSP). A compositionally biased stretch (low complexity) spans 299–308 (YSNSASYSSL). 3 C2H2-type zinc fingers span residues 374 to 398 (YKCP…IRIH), 404 to 426 (FQCR…VRTH), and 432 to 454 (FSCD…TKVH).

Belongs to the EGR C2H2-type zinc-finger protein family. In terms of tissue distribution, expressed in sheath cells and distal tip cells of the somatic gonad, as well as in the intestine and sperm (at protein level). Expression not observed in oocytes (at protein level).

Its subcellular location is the nucleus. The protein resides in the cytoplasm. The protein localises to the perinuclear region. In terms of biological role, sequence-specific DNA-binding transcription factor. Plays a role in oocyte development, acting cell-autonomously in the somatic gonad. Involved in negative regulation of oocyte MAPK activation and inhibits oocyte maturation and ovulation. The polypeptide is Early growth response factor homolog 1 (Caenorhabditis elegans).